Reading from the N-terminus, the 847-residue chain is Alanine--tRNA ligase (847 aa).

His554, His558, Cys656, and His660 together coordinate Zn(2+).

It belongs to the class-II aminoacyl-tRNA synthetase family. It depends on Zn(2+) as a cofactor.

It is found in the cytoplasm. It catalyses the reaction tRNA(Ala) + L-alanine + ATP = L-alanyl-tRNA(Ala) + AMP + diphosphate. In terms of biological role, catalyzes the attachment of alanine to tRNA(Ala) in a two-step reaction: alanine is first activated by ATP to form Ala-AMP and then transferred to the acceptor end of tRNA(Ala). Also edits incorrectly charged Ser-tRNA(Ala) and Gly-tRNA(Ala) via its editing domain. This is Alanine--tRNA ligase from Helicobacter pylori (strain HPAG1).